Reading from the N-terminus, the 663-residue chain is UvrABC system protein B (663 aa).

In terms of domain architecture, Helicase ATP-binding spans 26–414 (DGLESGLAKQ…DNVAEQVVRP (389 aa)). 39 to 46 (GVTGSGKT) serves as a coordination point for ATP. Residues 92–115 (YYDYYQPEAYVPASDTFIEKDASI) carry the Beta-hairpin motif. The Helicase C-terminal domain occupies 430–596 (QVDDLMSEIR…GINKSVEDIL (167 aa)). The region spanning 624–659 (AKQINALEKQMYAHAQNMEFELAAKIRDEYLLLKEQ) is the UVR domain.

The protein belongs to the UvrB family. In terms of assembly, forms a heterotetramer with UvrA during the search for lesions. Interacts with UvrC in an incision complex.

It is found in the cytoplasm. Its function is as follows. The UvrABC repair system catalyzes the recognition and processing of DNA lesions. A damage recognition complex composed of 2 UvrA and 2 UvrB subunits scans DNA for abnormalities. Upon binding of the UvrA(2)B(2) complex to a putative damaged site, the DNA wraps around one UvrB monomer. DNA wrap is dependent on ATP binding by UvrB and probably causes local melting of the DNA helix, facilitating insertion of UvrB beta-hairpin between the DNA strands. Then UvrB probes one DNA strand for the presence of a lesion. If a lesion is found the UvrA subunits dissociate and the UvrB-DNA preincision complex is formed. This complex is subsequently bound by UvrC and the second UvrB is released. If no lesion is found, the DNA wraps around the other UvrB subunit that will check the other stand for damage. The sequence is that of UvrABC system protein B from Legionella pneumophila (strain Lens).